Consider the following 339-residue polypeptide: Phenylalanine--tRNA ligase alpha subunit (339 aa).

Mg(2+) is bound at residue Glu250.

Belongs to the class-II aminoacyl-tRNA synthetase family. Phe-tRNA synthetase alpha subunit type 1 subfamily. As to quaternary structure, tetramer of two alpha and two beta subunits. It depends on Mg(2+) as a cofactor.

It localises to the cytoplasm. It carries out the reaction tRNA(Phe) + L-phenylalanine + ATP = L-phenylalanyl-tRNA(Phe) + AMP + diphosphate + H(+). This Parabacteroides distasonis (strain ATCC 8503 / DSM 20701 / CIP 104284 / JCM 5825 / NCTC 11152) protein is Phenylalanine--tRNA ligase alpha subunit.